The sequence spans 255 residues: Phosphoribosyl isomerase A (255 aa).

Catalysis depends on aspartate 21, which acts as the Proton acceptor. The active-site Proton donor is aspartate 140.

The protein belongs to the HisA/HisF family.

Its subcellular location is the cytoplasm. It catalyses the reaction 1-(5-phospho-beta-D-ribosyl)-5-[(5-phospho-beta-D-ribosylamino)methylideneamino]imidazole-4-carboxamide = 5-[(5-phospho-1-deoxy-D-ribulos-1-ylimino)methylamino]-1-(5-phospho-beta-D-ribosyl)imidazole-4-carboxamide. The enzyme catalyses N-(5-phospho-beta-D-ribosyl)anthranilate = 1-(2-carboxyphenylamino)-1-deoxy-D-ribulose 5-phosphate. The protein operates within amino-acid biosynthesis; L-histidine biosynthesis; L-histidine from 5-phospho-alpha-D-ribose 1-diphosphate: step 4/9. Its pathway is amino-acid biosynthesis; L-tryptophan biosynthesis; L-tryptophan from chorismate: step 3/5. Involved in both the histidine and tryptophan biosynthetic pathways. This Mycolicibacterium vanbaalenii (strain DSM 7251 / JCM 13017 / BCRC 16820 / KCTC 9966 / NRRL B-24157 / PYR-1) (Mycobacterium vanbaalenii) protein is Phosphoribosyl isomerase A.